The chain runs to 60 residues: Metallothionein (60 aa).

The segment at 1–28 (MDPCECSKTGNCTCGGSCTCKNCSCTSC) is beta. A divalent metal cation-binding residues include C4, C6, C12, C14, C18, C20, C23, C25, C28, C32, C33, C35, C36, C40, C43, C47, C49, C54, C58, and C59. The alpha stretch occupies residues 29–60 (KKSCCSCCPSGCSKCASGCVCKGKTCDTSCCQ).

The protein belongs to the metallothionein superfamily. Type 1 family.

Functionally, metallothioneins have a high content of cysteine residues that bind various heavy metals. This chain is Metallothionein (mt), found in Gobiomorphus cotidianus (New Zealand common bully).